Reading from the N-terminus, the 657-residue chain is L-type lectin-domain containing receptor kinase I.8 (657 aa).

The first 23 residues, 1–23, serve as a signal peptide directing secretion; the sequence is MAPGLDLIWMVISFLLLIHLSSQ. Topologically, residues 24–282 are extracellular; that stretch reads QETGFSFNGF…QVPHPKMKTS (259 aa). The segment at 25 to 257 is legume-lectin like; sequence ETGFSFNGFR…NHYILGWSFS (233 aa). Residues Asn74, Asn124, Asn181, Asn204, and Asn225 are each glycosylated (N-linked (GlcNAc...) asparagine). A helical membrane pass occupies residues 283–303; that stretch reads LLLILLLIVLGIILLVLLVGA. Topologically, residues 304-657 are cytoplasmic; it reads YLYRRNKYAE…THSIQYGIGR (354 aa). The Protein kinase domain occupies 339–611; it reads FHKDGFLGKG…VQYLDRQVSL (273 aa). ATP-binding positions include 345-353 and Lys366; that span reads LGKGGFGEV. Catalysis depends on Asp462, which acts as the Proton acceptor.

It in the C-terminal section; belongs to the protein kinase superfamily. Ser/Thr protein kinase family. The protein in the N-terminal section; belongs to the leguminous lectin family.

The protein resides in the cell membrane. It catalyses the reaction L-seryl-[protein] + ATP = O-phospho-L-seryl-[protein] + ADP + H(+). The catalysed reaction is L-threonyl-[protein] + ATP = O-phospho-L-threonyl-[protein] + ADP + H(+). Its function is as follows. Involved in resistance response to the pathogenic fungus Alternaria brassicicola. The chain is L-type lectin-domain containing receptor kinase I.8 from Arabidopsis thaliana (Mouse-ear cress).